The sequence spans 546 residues: T-complex protein 1 subunit zeta (546 aa).

Ser2 is modified (N-acetylserine). Residue Ser249 is modified to Phosphoserine.

Belongs to the TCP-1 chaperonin family. Heterooligomeric complex of about 850 to 900 kDa that forms two stacked rings, 12 to 16 nm in diameter.

Its subcellular location is the cytoplasm. Functionally, molecular chaperone; assists the folding of proteins upon ATP hydrolysis. Known to play a role, in vitro, in the folding of actin and tubulin. In yeast may play a role in mitotic spindle formation. This Saccharomyces cerevisiae (strain ATCC 204508 / S288c) (Baker's yeast) protein is T-complex protein 1 subunit zeta (CCT6).